We begin with the raw amino-acid sequence, 270 residues long: 5-amino-6-(5-phospho-D-ribitylamino)uracil phosphatase YitU (270 aa).

The active-site Nucleophile is the D11. Residue D11 coordinates Mg(2+). Residue L12 coordinates phosphate. Mg(2+) is bound at residue D13. Phosphate is bound by residues 45–46 (TG) and K197. D220 is a binding site for Mg(2+). Phosphate is bound at residue N223.

The protein belongs to the HAD-like hydrolase superfamily. Cof family. Mg(2+) serves as cofactor.

It catalyses the reaction 5-amino-6-(5-phospho-D-ribitylamino)uracil + H2O = 5-amino-6-(D-ribitylamino)uracil + phosphate. The protein operates within cofactor biosynthesis; riboflavin biosynthesis; 5-amino-6-(D-ribitylamino)uracil from GTP: step 4/4. In terms of biological role, catalyzes the dephosphorylation of the riboflavin precursor 5-amino-6-(5-phospho-D-ribitylamino)uracil and of flavin mononucleotide (FMN) in vitro. The protein is 5-amino-6-(5-phospho-D-ribitylamino)uracil phosphatase YitU (yitU) of Bacillus subtilis (strain 168).